A 198-amino-acid chain; its full sequence is Thymidine kinase (198 aa).

ATP is bound by residues 9-16 (STMNAGKS) and 87-90 (DEAQ). Glutamate 88 (proton acceptor) is an active-site residue. Residues cysteine 145, cysteine 147, cysteine 182, and histidine 185 each coordinate Zn(2+).

This sequence belongs to the thymidine kinase family. Homotetramer.

Its subcellular location is the cytoplasm. It carries out the reaction thymidine + ATP = dTMP + ADP + H(+). This is Thymidine kinase from Ruegeria pomeroyi (strain ATCC 700808 / DSM 15171 / DSS-3) (Silicibacter pomeroyi).